A 316-amino-acid chain; its full sequence is Beta-lactamase 3 (316 aa).

Positions 1-29 are cleaved as a signal peptide; the sequence is MFVLNKFFTNSHYKKIVPVVLLSCATLIG. A lipid anchor (N-palmitoyl cysteine) is attached at C30. C30 carries the S-diacylglycerol cysteine lipid modification. Residues 34 to 53 are disordered; the sequence is NTQSESNKQTNQTNQVKQEN. Positions 40 to 50 are enriched in low complexity; sequence NKQTNQTNQVK. S95 acts as the Acyl-ester intermediate in catalysis. Residue E191 is the Proton acceptor of the active site. 257 to 259 contacts substrate; the sequence is KTG.

Belongs to the class-A beta-lactamase family.

It is found in the cell membrane. The catalysed reaction is a beta-lactam + H2O = a substituted beta-amino acid. The sequence is that of Beta-lactamase 3 (blaZ) from Bacillus cereus.